The following is a 162-amino-acid chain: Large ribosomal subunit protein uL15 (162 aa).

Residues 1 to 13 (MKLNEIRDNEGAT) are compositionally biased toward basic and acidic residues. Residues 1–37 (MKLNEIRDNEGATKNRMRVGRGIGSGKGKTAGRGVKG) form a disordered region. Positions 21–35 (RGIGSGKGKTAGRGV) are enriched in gly residues.

Belongs to the universal ribosomal protein uL15 family. As to quaternary structure, part of the 50S ribosomal subunit.

In terms of biological role, binds to the 23S rRNA. The polypeptide is Large ribosomal subunit protein uL15 (Methylobacterium nodulans (strain LMG 21967 / CNCM I-2342 / ORS 2060)).